We begin with the raw amino-acid sequence, 334 residues long: Ornithine carbamoyltransferase, catabolic (334 aa).

Carbamoyl phosphate contacts are provided by residues 57 to 60 (STRT), Gln-84, Arg-108, and 135 to 138 (HPTQ). Residues Asn-169, Asp-233, and 237–238 (SM) each bind L-ornithine. Carbamoyl phosphate contacts are provided by residues 275–276 (CL) and Arg-320.

It belongs to the aspartate/ornithine carbamoyltransferase superfamily. OTCase family.

It localises to the cytoplasm. The catalysed reaction is carbamoyl phosphate + L-ornithine = L-citrulline + phosphate + H(+). It functions in the pathway amino-acid degradation; L-arginine degradation via ADI pathway; carbamoyl phosphate from L-arginine: step 2/2. In terms of biological role, reversibly catalyzes the transfer of the carbamoyl group from carbamoyl phosphate (CP) to the N(epsilon) atom of ornithine (ORN) to produce L-citrulline. The protein is Ornithine carbamoyltransferase, catabolic (arcB) of Salmonella typhimurium (strain LT2 / SGSC1412 / ATCC 700720).